Here is a 59-residue protein sequence, read N- to C-terminus: Large ribosomal subunit protein bL32 (59 aa).

Positions 1-22 (MAVPKKKTSNSKRDSRRAHWNR) are enriched in basic residues. Positions 1 to 59 (MAVPKKKTSNSKRDSRRAHWNRKANLAAQRALSTGKSILTGRAKGFEYPTKDDDEDDDE) are disordered.

The protein belongs to the bacterial ribosomal protein bL32 family.

This chain is Large ribosomal subunit protein bL32, found in Acaryochloris marina (strain MBIC 11017).